We begin with the raw amino-acid sequence, 715 residues long: Elongation factor G (715 aa).

The region spanning 8 to 290 is the tr-type G domain; sequence NRYRNIGICA…AVIDFLPAPT (283 aa). Residues 17-24, 88-92, and 142-145 each bind GTP; these read AHVDAGKT, DTPGH, and NKMD.

It belongs to the TRAFAC class translation factor GTPase superfamily. Classic translation factor GTPase family. EF-G/EF-2 subfamily.

The protein localises to the cytoplasm. In terms of biological role, catalyzes the GTP-dependent ribosomal translocation step during translation elongation. During this step, the ribosome changes from the pre-translocational (PRE) to the post-translocational (POST) state as the newly formed A-site-bound peptidyl-tRNA and P-site-bound deacylated tRNA move to the P and E sites, respectively. Catalyzes the coordinated movement of the two tRNA molecules, the mRNA and conformational changes in the ribosome. This chain is Elongation factor G, found in Pseudomonas fluorescens (strain ATCC BAA-477 / NRRL B-23932 / Pf-5).